A 320-amino-acid chain; its full sequence is Cytochrome f (320 aa).

A signal peptide spans 1-35 (MQMRNTFSWIKEEIIRFIAVSLIIYIITRAPISNA). Heme contacts are provided by tyrosine 36, cysteine 56, cysteine 59, and histidine 60. Residues 286–306 (VQGLLLFLASIILAQIFLVLK) form a helical membrane-spanning segment.

This sequence belongs to the cytochrome f family. As to quaternary structure, the 4 large subunits of the cytochrome b6-f complex are cytochrome b6, subunit IV (17 kDa polypeptide, petD), cytochrome f and the Rieske protein, while the 4 small subunits are PetG, PetL, PetM and PetN. The complex functions as a dimer. It depends on heme as a cofactor.

Its subcellular location is the plastid. It localises to the chloroplast thylakoid membrane. Functionally, component of the cytochrome b6-f complex, which mediates electron transfer between photosystem II (PSII) and photosystem I (PSI), cyclic electron flow around PSI, and state transitions. The chain is Cytochrome f from Morus indica (Mulberry).